The following is a 344-amino-acid chain: Dihydroorotase (344 aa).

H14 and H16 together coordinate Zn(2+). Substrate is bound by residues 16-18 and N42; that span reads HLR. Zn(2+) is bound by residues K99, H136, and H174. K99 bears the N6-carboxylysine mark. H136 contacts substrate. L219 is a substrate binding site. D247 serves as a coordination point for Zn(2+). D247 is an active-site residue. Positions 251 and 263 each coordinate substrate.

It belongs to the metallo-dependent hydrolases superfamily. DHOase family. Class II DHOase subfamily. In terms of assembly, homodimer. The cofactor is Zn(2+).

The enzyme catalyses (S)-dihydroorotate + H2O = N-carbamoyl-L-aspartate + H(+). It participates in pyrimidine metabolism; UMP biosynthesis via de novo pathway; (S)-dihydroorotate from bicarbonate: step 3/3. Catalyzes the reversible cyclization of carbamoyl aspartate to dihydroorotate. The polypeptide is Dihydroorotase (Teredinibacter turnerae (strain ATCC 39867 / T7901)).